A 437-amino-acid chain; its full sequence is Ribosomal protein uS12 methylthiotransferase RimO (437 aa).

The 112-residue stretch at 5–116 (PTISVSHLGC…IAEVIQRVET (112 aa)) folds into the MTTase N-terminal domain. Positions 14, 50, 79, 154, 158, and 161 each coordinate [4Fe-4S] cluster. Residues 140 to 369 (TTNEAVAYLR…MEIQQPIAAK (230 aa)) enclose the Radical SAM core domain. The 66-residue stretch at 372–437 (QKCVGQTVEV…DVYDLYGKVI (66 aa)) folds into the TRAM domain.

This sequence belongs to the methylthiotransferase family. RimO subfamily. It depends on [4Fe-4S] cluster as a cofactor.

It is found in the cytoplasm. The catalysed reaction is L-aspartate(89)-[ribosomal protein uS12]-hydrogen + (sulfur carrier)-SH + AH2 + 2 S-adenosyl-L-methionine = 3-methylsulfanyl-L-aspartate(89)-[ribosomal protein uS12]-hydrogen + (sulfur carrier)-H + 5'-deoxyadenosine + L-methionine + A + S-adenosyl-L-homocysteine + 2 H(+). Functionally, catalyzes the methylthiolation of an aspartic acid residue of ribosomal protein uS12. In Crocosphaera subtropica (strain ATCC 51142 / BH68) (Cyanothece sp. (strain ATCC 51142)), this protein is Ribosomal protein uS12 methylthiotransferase RimO.